Here is a 502-residue protein sequence, read N- to C-terminus: ATP synthase subunit alpha (502 aa).

An ATP-binding site is contributed by 169 to 176 (GDKQTGKT).

The protein belongs to the ATPase alpha/beta chains family. As to quaternary structure, F-type ATPases have 2 components, CF(1) - the catalytic core - and CF(0) - the membrane proton channel. CF(1) has five subunits: alpha(3), beta(3), gamma(1), delta(1), epsilon(1). CF(0) has three main subunits: a(1), b(2) and c(9-12). The alpha and beta chains form an alternating ring which encloses part of the gamma chain. CF(1) is attached to CF(0) by a central stalk formed by the gamma and epsilon chains, while a peripheral stalk is formed by the delta and b chains.

Its subcellular location is the cell membrane. The enzyme catalyses ATP + H2O + 4 H(+)(in) = ADP + phosphate + 5 H(+)(out). Produces ATP from ADP in the presence of a proton gradient across the membrane. The alpha chain is a regulatory subunit. In Lachnoclostridium phytofermentans (strain ATCC 700394 / DSM 18823 / ISDg) (Clostridium phytofermentans), this protein is ATP synthase subunit alpha.